Here is a 218-residue protein sequence, read N- to C-terminus: Mediator of RNA polymerase II transcription subunit 20 (218 aa).

The protein belongs to the Mediator complex subunit 20 family. Component of the Mediator complex.

The protein localises to the nucleus. Functionally, component of the Mediator complex, a coactivator involved in the regulated transcription of nearly all RNA polymerase II-dependent genes. Mediator functions as a bridge to convey information from gene-specific regulatory proteins to the basal RNA polymerase II transcription machinery. Mediator is recruited to promoters by direct interactions with regulatory proteins and serves as a scaffold for the assembly of a functional preinitiation complex with RNA polymerase II and the general transcription factors. The chain is Mediator of RNA polymerase II transcription subunit 20 (SRB2) from Yarrowia lipolytica (strain CLIB 122 / E 150) (Yeast).